Consider the following 76-residue polypeptide: Exodeoxyribonuclease 7 small subunit (76 aa).

The protein belongs to the XseB family. As to quaternary structure, heterooligomer composed of large and small subunits.

Its subcellular location is the cytoplasm. It catalyses the reaction Exonucleolytic cleavage in either 5'- to 3'- or 3'- to 5'-direction to yield nucleoside 5'-phosphates.. In terms of biological role, bidirectionally degrades single-stranded DNA into large acid-insoluble oligonucleotides, which are then degraded further into small acid-soluble oligonucleotides. In Geotalea daltonii (strain DSM 22248 / JCM 15807 / FRC-32) (Geobacter daltonii), this protein is Exodeoxyribonuclease 7 small subunit.